Consider the following 266-residue polypeptide: Ubiquinone biosynthesis protein COQ4 homolog, mitochondrial (266 aa).

Zn(2+) is bound by residues histidine 169, aspartate 170, histidine 173, and glutamate 185.

The protein belongs to the COQ4 family. In terms of assembly, component of a multi-subunit COQ enzyme complex. Requires Zn(2+) as cofactor.

Its subcellular location is the mitochondrion inner membrane. The catalysed reaction is a 4-hydroxy-3-methoxy-5-(all-trans-polyprenyl)benzoate + H(+) = a 2-methoxy-6-(all-trans-polyprenyl)phenol + CO2. Its pathway is cofactor biosynthesis; ubiquinone biosynthesis. In terms of biological role, lyase that catalyzes the C1-decarboxylation of 4-hydroxy-3-methoxy-5-(all-trans-polyprenyl)benzoic acid into 2-methoxy-6-(all-trans-polyprenyl)phenol during ubiquinone biosynthesis. This chain is Ubiquinone biosynthesis protein COQ4 homolog, mitochondrial, found in Drosophila ananassae (Fruit fly).